The primary structure comprises 401 residues: S-adenosylmethionine synthase (401 aa).

136-141 (GTGSSD) is a binding site for ATP. Residues 278-305 (GDDGSVGRGNRSNGLITPSRPMSMEATS) form a disordered region.

Belongs to the AdoMet synthase 2 family. It depends on Mg(2+) as a cofactor.

The enzyme catalyses L-methionine + ATP + H2O = S-adenosyl-L-methionine + phosphate + diphosphate. The protein operates within amino-acid biosynthesis; S-adenosyl-L-methionine biosynthesis; S-adenosyl-L-methionine from L-methionine: step 1/1. Catalyzes the formation of S-adenosylmethionine from methionine and ATP. In Methanococcoides burtonii (strain DSM 6242 / NBRC 107633 / OCM 468 / ACE-M), this protein is S-adenosylmethionine synthase.